The following is a 908-amino-acid chain: E3 ubiquitin-protein ligase ZNF598 (908 aa).

The segment at 27 to 67 (CVLCCGDLEATALGRCDHPVCYRCSTKMRVLCEQRYCAVCR) adopts an RING-type zinc-finger fold. The C2H2-type zinc finger occupies 185 to 208 (PLCKFCDERYLDNDELLKHLRRDH). 5 disordered regions span residues 292–338 (SRRS…KREE), 350–441 (SVAA…EEDF), 467–557 (PGPP…TVQG), 569–619 (SLLA…LEAP), and 719–744 (PSSHSACAPSPTTTTTTTTTTKTPGL). S295 is modified (phosphoserine). Y304 is modified (phosphotyrosine). Residues 313–329 (QGRAGRASGRGAQQNRR) show a composition bias toward low complexity. Residues 358–385 (ETQRVEDREEGSRPKKEEAAARVPEEPR) are compositionally biased toward basic and acidic residues. The residue at position 433 (S433) is a Phosphoserine. Residues 482-501 (PALVSSAPKPSSAPSSLISA) are compositionally biased toward low complexity. A compositionally biased stretch (basic residues) spans 529 to 538 (KAGKGSRGGR).

This sequence belongs to the ZNF598/HEL2 family. As to quaternary structure, interacts with the E2 ubiquitin-conjugating enzyme UBE2D3. Component of the 4EHP-GYF2 complex, at least composed of EIF4E2, GIGYF2 and ZNF598.

Its subcellular location is the cytoplasm. The protein localises to the cytosol. It carries out the reaction S-ubiquitinyl-[E2 ubiquitin-conjugating enzyme]-L-cysteine + [acceptor protein]-L-lysine = [E2 ubiquitin-conjugating enzyme]-L-cysteine + N(6)-ubiquitinyl-[acceptor protein]-L-lysine.. It participates in protein modification; protein ubiquitination. In terms of biological role, E3 ubiquitin-protein ligase that plays a key role in the ribosome quality control (RQC), a pathway that takes place when a ribosome has stalled during translation, leading to degradation of nascent peptide chains. ZNF598 is activated when ribosomes are stalled within an mRNA following translation of prematurely polyadenylated mRNAs. Acts as a ribosome collision sensor: specifically recognizes and binds collided di-ribosome, which arises when a trailing ribosome encounters a slower leading ribosome, leading to terminally arrest translation. Following binding to colliding ribosomes, mediates monoubiquitination of 40S ribosomal proteins RPS10/eS10 and RPS3/uS3, and 'Lys-63'-linked polyubiquitination of RPS20/uS10. Polyubiquitination of RPS20/uS10 promotes recruitment of the RQT (ribosome quality control trigger) complex, which drives the disassembly of stalled ribosomes, followed by degradation of nascent peptides. E3 ubiquitin-protein ligase activity is dependent on the E2 ubiquitin-conjugating enzyme UBE2D3. Also acts as an adapter that recruits the 4EHP-GYF2 complex to mRNAs. Independently of its role in RQC, may also act as a negative regulator of interferon-stimulated gene (ISG) expression. In Mus musculus (Mouse), this protein is E3 ubiquitin-protein ligase ZNF598.